Here is a 208-residue protein sequence, read N- to C-terminus: MRKIRTKICGITTPEDALYAAHAGADALGLVFYPQSPRAIDIIKAQKIAAALPPFVSVVALFVNESAQNIRRILAEVPIHIIQFHGDEDDAFCRQFDRPYIKAIRVQTASDIRNAATRFPNAQALLFDAYHPSEYGGTGHRFDWTLLAEYSGKPWVLAGGLTPENVGEAVRITGAEAVDVSGGVEASKGKKDPAKVAAFIATANRLSR.

The protein belongs to the TrpF family.

It catalyses the reaction N-(5-phospho-beta-D-ribosyl)anthranilate = 1-(2-carboxyphenylamino)-1-deoxy-D-ribulose 5-phosphate. The protein operates within amino-acid biosynthesis; L-tryptophan biosynthesis; L-tryptophan from chorismate: step 3/5. This Neisseria gonorrhoeae (strain ATCC 700825 / FA 1090) protein is N-(5'-phosphoribosyl)anthranilate isomerase.